The primary structure comprises 425 residues: Interferon regulatory factor 8 (425 aa).

A DNA-binding region (IRF tryptophan pentad repeat) is located at residues 7-114 (GRRLRQWLIE…EPYKVYRIVP (108 aa)).

Belongs to the IRF family.

The protein localises to the nucleus. It localises to the cytoplasm. Plays a role as a transcriptional activator or repressor. Specifically binds to the upstream regulatory region of type I IFN and IFN-inducible MHC class I genes (the interferon consensus sequence (ICS)). Plays a regulatory role in cells of the immune system. In Gallus gallus (Chicken), this protein is Interferon regulatory factor 8 (IRF8).